We begin with the raw amino-acid sequence, 650 residues long: Chaperone protein HtpG (650 aa).

Residues 1-356 (MSTRVETLEF…THDLSLNISR (356 aa)) are a; substrate-binding. Residues 222-245 (AKDRDSNDDGTAESGAGAENAGDR) form a disordered region. The tract at residues 357 to 572 (EILQQDRRIQ…TFDMTPALEK (216 aa)) is b. Residues 573-650 (MYRAMGHEMP…LLAERLAEAL (78 aa)) form a c region.

Belongs to the heat shock protein 90 family. As to quaternary structure, homodimer.

The protein localises to the cytoplasm. Its function is as follows. Molecular chaperone. Has ATPase activity. In Frankia casuarinae (strain DSM 45818 / CECT 9043 / HFP020203 / CcI3), this protein is Chaperone protein HtpG.